Consider the following 432-residue polypeptide: Solute carrier family 38 member 8 (432 aa).

The next 11 helical transmembrane spans lie at 29–49 (AVFI…PWAF), 59–79 (FLVA…LGYA), 103–123 (LCEI…LRVI), 144–164 (AAQN…LSAL), 175–195 (ILGT…YYLW), 215–237 (VFSV…SIYC), 253–273 (LSLL…FLTF), 292–312 (IIVA…IVLF), 345–365 (LPLT…LPDL), 368–388 (IISI…GLCL), and 409–429 (GILS…VAMV).

Belongs to the amino acid/polyamine transporter 2 family. In terms of tissue distribution, expressed in neurons located in the gray matter. Highly expressed in thalamus, hypothalamus, amygdala and pons. Expressed in the CA3 area of hippocampus and in the Purkinje layer of the cerebellum (at protein level). Expressed in the eye.

Its subcellular location is the membrane. The protein localises to the cytoplasm. It localises to the cell cortex. It is found in the cell projection. The protein resides in the axon. It carries out the reaction L-glutamine(out) = L-glutamine(in). The catalysed reaction is L-alanine(in) = L-alanine(out). It catalyses the reaction L-histidine(out) = L-histidine(in). The enzyme catalyses L-aspartate(out) = L-aspartate(in). It carries out the reaction L-arginine(in) = L-arginine(out). The catalysed reaction is L-leucine(in) = L-leucine(out). Its function is as follows. Electrogenic sodium-dependent amino acid transporter with a preference for L-glutamine, L-alanine, L-histidine, L-aspartate and L-arginine. May facilitate glutamine uptake in both excitatory and inhibitory neurons. The transport mechanism and stoichiometry remain to be elucidated. The polypeptide is Solute carrier family 38 member 8 (Mus musculus (Mouse)).